Reading from the N-terminus, the 585-residue chain is Protein FAM151A (585 aa).

A helical transmembrane segment spans residues 14-34 (WVFAGITCVSVVVIAAIVLAI).

The protein belongs to the menorin family.

It is found in the membrane. The polypeptide is Protein FAM151A (FAM151A) (Homo sapiens (Human)).